Here is a 279-residue protein sequence, read N- to C-terminus: Probable flavonol synthase 4 (279 aa).

The segment at 1 to 25 (MEVERDQHKPPLSLQNNKIPSSQNF) is disordered. Positions 13 to 25 (SLQNNKIPSSQNF) are enriched in polar residues. A Fe2OG dioxygenase domain is found at 156–256 (GAGYLMKINY…RMSSVVHIKP (101 aa)). 164-166 (NYY) provides a ligand contact to 2-oxoglutarate. Residues H181, D183, and H237 each contribute to the Fe cation site. Position 247-249 (247-249 (RMS)) interacts with 2-oxoglutarate.

Belongs to the iron/ascorbate-dependent oxidoreductase family. Fe(2+) is required as a cofactor.

It catalyses the reaction a (2R,3R)-dihydroflavonol + 2-oxoglutarate + O2 = a flavonol + succinate + CO2 + H2O. Its pathway is secondary metabolite biosynthesis; flavonoid biosynthesis. The polypeptide is Probable flavonol synthase 4 (FLS4) (Arabidopsis thaliana (Mouse-ear cress)).